Reading from the N-terminus, the 282-residue chain is Protoheme IX farnesyltransferase (282 aa).

The next 8 membrane-spanning stretches (helical) occupy residues 40-60 (LVLA…FNMV), 87-107 (AVLA…AVNP), 108-128 (YVFV…TVLL), 135-157 (SVVF…ATGG), 162-184 (GVLL…STYY), 204-224 (AGVV…FLAF), 228-248 (LISA…VAVL), and 261-281 (AYRA…LLVL).

It belongs to the UbiA prenyltransferase family. Protoheme IX farnesyltransferase subfamily.

It is found in the cell membrane. It carries out the reaction heme b + (2E,6E)-farnesyl diphosphate + H2O = Fe(II)-heme o + diphosphate. It participates in porphyrin-containing compound metabolism; heme O biosynthesis; heme O from protoheme: step 1/1. Converts heme B (protoheme IX) to heme O by substitution of the vinyl group on carbon 2 of heme B porphyrin ring with a hydroxyethyl farnesyl side group. This is Protoheme IX farnesyltransferase from Thermofilum pendens (strain DSM 2475 / Hrk 5).